Consider the following 734-residue polypeptide: Serine protease FAM111B (734 aa).

N-acetylmethionine is present on methionine 1. Composition is skewed to basic and acidic residues over residues 1 to 10 and 17 to 32; these read MNSMKTEENK and DDQR…TVMK. The disordered stretch occupies residues 1–32; that stretch reads MNSMKTEENKSFSAMEDDQRTRPEVSKDTVMK. Lysine 284 is covalently cross-linked (Glycyl lysine isopeptide (Lys-Gly) (interchain with G-Cter in SUMO2)). Positions 285–321 are disordered; sequence QNESATDEINHQSLIQSKKKVHKPKKDGETKDVEHSR. The span at 310 to 321 shows a compositional bias: basic and acidic residues; it reads KDGETKDVEHSR. Active-site charge relay system residues include histidine 490, aspartate 544, and serine 650. Positions 712 to 734 are disordered; that stretch reads TYDEEKGKQESSLQDHQIEPMEC.

Belongs to the FAM111 family. In terms of tissue distribution, widely expressed.

In terms of biological role, serine protease. The chain is Serine protease FAM111B from Homo sapiens (Human).